Consider the following 1368-residue polypeptide: Inactive tyrosine-protein kinase PRAG1 (1368 aa).

The segment at 200–236 (CLKGPRPCTSPQPLRESLPSEDDSDQRCSPSGDSEGG) is disordered. Phosphotyrosine; by CSK is present on Tyr-238. The interval 297–330 (STANPPHLGPKKPSLNSEAASSSDGLSCGSSRSG) is disordered. A compositionally biased stretch (low complexity) spans 317–330 (SSSDGLSCGSSRSG). Tyr-343 and Tyr-391 each carry phosphotyrosine; by CSK. 3 disordered regions span residues 392–443 (AESA…PNAA), 499–605 (LSSR…GAWS), and 636–792 (HSNS…KKIV). Residues 414–434 (VSSGQVWTGDTWSQKTPSGWS) are compositionally biased toward polar residues. Positions 502–518 (RESHPHNMTENSSKEKP) are enriched in basic and acidic residues. Low complexity-rich tracts occupy residues 522–535 (PKLS…SPVS) and 550–563 (SGSS…SRVP). Polar residues-rich tracts occupy residues 564–574 (TNLTSSCQTNG) and 652–666 (SGQN…SKSA). Phosphoserine is present on residues Ser-667 and Ser-716. Polar residues-rich tracts occupy residues 707-717 (VSQSSAESLSP) and 725-741 (SFTT…SRTC). Phosphoserine occurs at positions 753 and 797. 2 disordered regions span residues 799 to 818 (PDGF…SPKL) and 873 to 901 (NSKG…VSSQ). The segment covering 887 to 901 (AATSTSSSQLSVSSQ) has biased composition (low complexity). Residues 906–949 (SSQLQLHSLLSSISSKEGTYAKLGGLYTQSLARLVTKCEDLFMG) form a required for homodimerization region. Residues 940-1291 (VTKCEDLFMG…EAKRVLQCLL (352 aa)) enclose the Protein kinase domain. The segment covering 1134 to 1144 (SSPGPSANPSV) has biased composition (polar residues). The interval 1134–1166 (SSPGPSANPSVPTTTSRCPSAAPAATTACQGGP) is disordered. Over residues 1145-1162 (PTTTSRCPSAAPAATTAC) the composition is skewed to low complexity. Residues 1293–1368 (GPRRELVEQP…LQSLKLLQLL (76 aa)) are required for homodimerization.

This sequence belongs to the protein kinase superfamily. As to quaternary structure, homodimer. Dimerization leads to the catalytic activation of CSK. Interacts (via C-terminus) with RND2. Interacts with CSK (via SH2 domain) in a Tyr-391 phosphorylation-dependent manner; this interaction potentiates kinase activity of CSK. Interacts with NOTCH1 intracellular domain (N1ICD). Forms a complex with N1ICD and MAML1, in a MAML1-dependent manner. In terms of processing, phosphorylated by CSK on Tyr-238, Tyr-343, and Tyr-391; Tyr-391 is a primary site of phosphorylation. As to expression, highly-expressed in brain, including cortical and hippocampal pyramidal neurons, as well as in kidney, spleen, colon and small intestine.

The protein localises to the cytoplasm. It is found in the nucleus. The protein resides in the cell junction. Its subcellular location is the focal adhesion. In terms of biological role, catalytically inactive protein kinase that acts as a scaffold protein. Functions as an effector of the small GTPase RND2, which stimulates RhoA activity and inhibits NGF-induced neurite outgrowth. Promotes Src family kinase (SFK) signallig by regulating the subcellular localization of CSK, a negative regulator of these kinases, leading to the regulation of cell morphology and motility by a CSK-dependent mechanism. Acts as a critical coactivator of Notch signaling. This chain is Inactive tyrosine-protein kinase PRAG1, found in Rattus norvegicus (Rat).